The chain runs to 518 residues: Cytochrome P450 CYP72A219 (518 aa).

Residues 2–22 (ELVLKLISSFCAIVVVILLGW) form a helical membrane-spanning segment. Cys-465 serves as a coordination point for heme.

It belongs to the cytochrome P450 family. Heme serves as cofactor.

The protein localises to the membrane. Functionally, probable heme-thiolate monooxygenase. The chain is Cytochrome P450 CYP72A219 from Panax ginseng (Korean ginseng).